Reading from the N-terminus, the 207-residue chain is Ribosomal RNA small subunit methyltransferase G (207 aa).

Residues glycine 73, leucine 78, 124 to 125 (VE), and arginine 139 contribute to the S-adenosyl-L-methionine site.

This sequence belongs to the methyltransferase superfamily. RNA methyltransferase RsmG family.

The protein localises to the cytoplasm. The catalysed reaction is guanosine(527) in 16S rRNA + S-adenosyl-L-methionine = N(7)-methylguanosine(527) in 16S rRNA + S-adenosyl-L-homocysteine. In terms of biological role, specifically methylates the N7 position of guanine in position 527 of 16S rRNA. In Enterobacter sp. (strain 638), this protein is Ribosomal RNA small subunit methyltransferase G.